A 159-amino-acid polypeptide reads, in one-letter code: MSYSITSPSQFVFLSSVWADPIELLNFGTNSLGNQFQTQQARTTVQQQFSEVWKPFPQSTVRFPGDVYKVYRYNAVLDPLITALLGSFDTRNRIIEVENQQNPTTAETLDATRRVDDATVAIRSAINNLVNELVRGTGLYNQNTFESMSGLVWTSAPAS.

An N-acetylserine; by host modification is found at serine 2.

Belongs to the virgaviridae capsid protein family.

The protein localises to the virion. Functionally, capsid protein self-assembles to form rod-shaped virions about 18 nm in diameter with a central canal enclosing the viral genomic RNA. The chain is Capsid protein (CP) from Capsicum (peppers).